The sequence spans 341 residues: Follistatin (341 aa).

Residues M1–A29 form the signal peptide. A TB domain is found at G30–G103. 8 cysteine pairs are disulfide-bonded: C32–C55, C42–C88, C56–C91, C95–C106, C100–C116, C118–C150, C122–C143, and C132–C164. N72 carries N-linked (GlcNAc...) asparagine glycosylation. Residues T94–V117 enclose the Follistatin-like 1 domain. Kazal-like domains lie at C100 to K166, N186 to K241, and R264 to S318. A glycan (N-linked (GlcNAc...) asparagine) is linked at N124. The Follistatin-like 2 domain occupies T167–V190. 3 disulfide bridges follow: C192-C225, C196-C218, and C207-C239. In terms of domain architecture, Follistatin-like 3 spans S244–A268. Disulfide bonds link C270–C302, C274–C295, and C284–C316. N288 is a glycosylation site (N-linked (GlcNAc...) asparagine). Over residues E321–D333 the composition is skewed to acidic residues. Residues E321–W341 form a disordered region.

Monomer. In terms of tissue distribution, spemann organizer and notochord.

The protein localises to the secreted. In terms of biological role, binds directly to activin and functions as an activin antagonist which plays a role in neural induction. The short isoform is a more potent inhibitor of activin than the long isoform. Specific inhibitor of the biosynthesis and secretion of pituitary follicle stimulating hormone (FSH). The polypeptide is Follistatin (fst) (Xenopus laevis (African clawed frog)).